Here is a 340-residue protein sequence, read N- to C-terminus: Dihydroorotate dehydrogenase (quinone) (340 aa).

FMN contacts are provided by residues 65-69 and threonine 89; that span reads AGLDK. Position 69 (lysine 69) interacts with substrate. 114 to 118 is a binding site for substrate; the sequence is NRMGF. Positions 142 and 175 each coordinate FMN. Asparagine 175 is a binding site for substrate. Serine 178 functions as the Nucleophile in the catalytic mechanism. Asparagine 180 is a binding site for substrate. Positions 220 and 248 each coordinate FMN. 249–250 is a substrate binding site; that stretch reads NT. Residues glycine 271, glycine 300, and 321–322 each bind FMN; that span reads YT.

This sequence belongs to the dihydroorotate dehydrogenase family. Type 2 subfamily. In terms of assembly, monomer. Requires FMN as cofactor.

The protein resides in the cell membrane. The catalysed reaction is (S)-dihydroorotate + a quinone = orotate + a quinol. It participates in pyrimidine metabolism; UMP biosynthesis via de novo pathway; orotate from (S)-dihydroorotate (quinone route): step 1/1. Functionally, catalyzes the conversion of dihydroorotate to orotate with quinone as electron acceptor. The sequence is that of Dihydroorotate dehydrogenase (quinone) from Paraburkholderia xenovorans (strain LB400).